The primary structure comprises 341 residues: Nicotinate-nucleotide--dimethylbenzimidazole phosphoribosyltransferase (341 aa).

The Proton acceptor role is filled by Glu310.

It belongs to the CobT family.

It catalyses the reaction 5,6-dimethylbenzimidazole + nicotinate beta-D-ribonucleotide = alpha-ribazole 5'-phosphate + nicotinate + H(+). Its pathway is nucleoside biosynthesis; alpha-ribazole biosynthesis; alpha-ribazole from 5,6-dimethylbenzimidazole: step 1/2. Catalyzes the synthesis of alpha-ribazole-5'-phosphate from nicotinate mononucleotide (NAMN) and 5,6-dimethylbenzimidazole (DMB). This chain is Nicotinate-nucleotide--dimethylbenzimidazole phosphoribosyltransferase, found in Vibrio cholerae serotype O1 (strain ATCC 39315 / El Tor Inaba N16961).